A 193-amino-acid chain; its full sequence is Oligoribonuclease (193 aa).

An Exonuclease domain is found at 8 to 171; that stretch reads LVWLDLEMTG…EDIRESVAEL (164 aa). Tyr129 is a catalytic residue.

The protein belongs to the oligoribonuclease family.

The protein localises to the cytoplasm. Functionally, 3'-to-5' exoribonuclease specific for small oligoribonucleotides. The polypeptide is Oligoribonuclease (Alkalilimnicola ehrlichii (strain ATCC BAA-1101 / DSM 17681 / MLHE-1)).